A 407-amino-acid polypeptide reads, in one-letter code: METYETSIGTQSYPPTLFPPPLGTGGFTTSGYIHALVDSTSNSNSNSNSNSNTNSNTNSNSDTKIPIVQISDDSHITHDSFKPYMEYHDASHLRNRNISKADQVDSTEVMEQFTQWSNYKMRSRSPTINAKPIRHTSQRRTDFTSKNELSKFSKNHNFIFHKGFLKRQHSIRREDRQAKVRSRFRSKKELTSVLNYIELEQMDIANVLASQSVNLHAIRNLTSRDPAVTPIPFLRSQMYATSSRPPYLRNRSIRRKLPKSQPGSLPTTTPATATKTIKQNSTTPTTRSVYNKNVGRSNTSPSVLYHPKRRGKLNTKSHARKEQLLLELWREYLMLVITQRTQLRLTLLCSPGSASNESSVCSSNASDLDMSLLSTPSSLFQMAGETKSNPIIIPDSQDDSILSSDPF.

The span at 40-61 shows a compositional bias: low complexity; that stretch reads TSNSNSNSNSNSNTNSNTNSNS. Disordered regions lie at residues 40–64 and 251–315; these read TSNSNSNSNSNSNTNSNTNSNSDTK and RSIR…KLNT. Phosphoserine is present on residues S260 and S264. Residues 266-276 are compositionally biased toward low complexity; it reads PTTTPATATKT. Residues 277–302 are compositionally biased toward polar residues; that stretch reads IKQNSTTPTTRSVYNKNVGRSNTSPS. Phosphoserine is present on residues S300 and S302. A compositionally biased stretch (basic residues) spans 306-315; the sequence is HPKRRGKLNT. Residues 391 to 398 carry the SUMO-binding motif; sequence IIIPDSQD.

As to quaternary structure, interacts with CBF2, GIS1, NAP1, PRM8, REI1, SHS1 and SMT3.

It is found in the bud neck. The protein localises to the cytoplasm. The protein resides in the cell cortex. Its function is as follows. May be involved in a mitotic signaling network. Binds sumoylated proteins and may stabilize SUMO chains. The protein is Protein NIS1 (NIS1) of Saccharomyces cerevisiae (strain YJM789) (Baker's yeast).